A 418-amino-acid chain; its full sequence is NADH-quinone oxidoreductase subunit D (418 aa).

It belongs to the complex I 49 kDa subunit family. NDH-1 is composed of 14 different subunits. Subunits NuoB, C, D, E, F, and G constitute the peripheral sector of the complex.

The protein resides in the cell inner membrane. It carries out the reaction a quinone + NADH + 5 H(+)(in) = a quinol + NAD(+) + 4 H(+)(out). Its function is as follows. NDH-1 shuttles electrons from NADH, via FMN and iron-sulfur (Fe-S) centers, to quinones in the respiratory chain. The immediate electron acceptor for the enzyme in this species is believed to be ubiquinone. Couples the redox reaction to proton translocation (for every two electrons transferred, four hydrogen ions are translocated across the cytoplasmic membrane), and thus conserves the redox energy in a proton gradient. The protein is NADH-quinone oxidoreductase subunit D of Methylacidiphilum infernorum (isolate V4) (Methylokorus infernorum (strain V4)).